The following is a 364-amino-acid chain: DNA replication and repair protein RecF (364 aa).

Residue 30–37 participates in ATP binding; the sequence is GANGSGKT.

It belongs to the RecF family.

It localises to the cytoplasm. The RecF protein is involved in DNA metabolism; it is required for DNA replication and normal SOS inducibility. RecF binds preferentially to single-stranded, linear DNA. It also seems to bind ATP. This Sodalis glossinidius protein is DNA replication and repair protein RecF.